Consider the following 459-residue polypeptide: tRNA modification GTPase MnmE (459 aa).

(6S)-5-formyl-5,6,7,8-tetrahydrofolate-binding residues include Arg-22, Glu-85, and Arg-124. The 160-residue stretch at 221-380 folds into the TrmE-type G domain; the sequence is GLSTVIVGKP…LEIQIRDLFF (160 aa). Asn-231 is a binding site for K(+). GTP contacts are provided by residues 231-236, 250-256, and 275-278; these read NVGKSS, TEVAGTT, and DTAG. Residue Ser-235 coordinates Mg(2+). K(+)-binding residues include Thr-250, Val-252, and Thr-255. Residue Thr-256 coordinates Mg(2+). Residue Lys-459 coordinates (6S)-5-formyl-5,6,7,8-tetrahydrofolate.

Belongs to the TRAFAC class TrmE-Era-EngA-EngB-Septin-like GTPase superfamily. TrmE GTPase family. Homodimer. Heterotetramer of two MnmE and two MnmG subunits. K(+) is required as a cofactor.

It is found in the cytoplasm. Its function is as follows. Exhibits a very high intrinsic GTPase hydrolysis rate. Involved in the addition of a carboxymethylaminomethyl (cmnm) group at the wobble position (U34) of certain tRNAs, forming tRNA-cmnm(5)s(2)U34. The polypeptide is tRNA modification GTPase MnmE (Staphylococcus aureus (strain USA300 / TCH1516)).